We begin with the raw amino-acid sequence, 156 residues long: Small ribosomal subunit protein uS7 (156 aa).

The protein belongs to the universal ribosomal protein uS7 family. As to quaternary structure, part of the 30S ribosomal subunit. Contacts proteins S9 and S11.

In terms of biological role, one of the primary rRNA binding proteins, it binds directly to 16S rRNA where it nucleates assembly of the head domain of the 30S subunit. Is located at the subunit interface close to the decoding center, probably blocks exit of the E-site tRNA. The sequence is that of Small ribosomal subunit protein uS7 from Phytoplasma mali (strain AT).